The sequence spans 115 residues: Nucleoid-associated protein Ccel_0243 (115 aa).

The protein belongs to the YbaB/EbfC family. Homodimer.

It is found in the cytoplasm. The protein resides in the nucleoid. Binds to DNA and alters its conformation. May be involved in regulation of gene expression, nucleoid organization and DNA protection. This chain is Nucleoid-associated protein Ccel_0243, found in Ruminiclostridium cellulolyticum (strain ATCC 35319 / DSM 5812 / JCM 6584 / H10) (Clostridium cellulolyticum).